We begin with the raw amino-acid sequence, 210 residues long: Dephospho-CoA kinase (210 aa).

Residues W4–K202 form the DPCK domain. G12–A17 is an ATP binding site.

The protein belongs to the CoaE family.

It localises to the cytoplasm. The catalysed reaction is 3'-dephospho-CoA + ATP = ADP + CoA + H(+). The protein operates within cofactor biosynthesis; coenzyme A biosynthesis; CoA from (R)-pantothenate: step 5/5. Catalyzes the phosphorylation of the 3'-hydroxyl group of dephosphocoenzyme A to form coenzyme A. The sequence is that of Dephospho-CoA kinase from Neisseria gonorrhoeae.